The chain runs to 630 residues: Probable potassium transport system protein Kup 2 (630 aa).

Helical transmembrane passes span Phe-17–Leu-37, Val-56–Lys-76, Val-108–Thr-128, Pro-145–Phe-165, Ala-176–Ile-196, Phe-214–Thr-234, Trp-255–Leu-275, Phe-293–Ile-313, Ile-345–Phe-365, Tyr-375–Trp-395, Pro-402–Ala-422, and Leu-427–Val-447.

It belongs to the HAK/KUP transporter (TC 2.A.72) family.

It localises to the cell inner membrane. The catalysed reaction is K(+)(in) + H(+)(in) = K(+)(out) + H(+)(out). In terms of biological role, transport of potassium into the cell. Likely operates as a K(+):H(+) symporter. In Rhodopseudomonas palustris (strain BisB18), this protein is Probable potassium transport system protein Kup 2.